The following is a 33-amino-acid chain: Brevinin 2AV (33 aa).

A disulfide bridge links Cys27 with Cys33.

As to expression, expressed by the skin glands.

Its subcellular location is the secreted. Functionally, has antibacterial activity. The sequence is that of Brevinin 2AV from Rana arvalis (Moor frog).